A 1163-amino-acid polypeptide reads, in one-letter code: Type IV pilus biogenesis factor PilY1 (1163 aa).

A signal peptide spans 1–30 (MKSALHQIGKTSLAAALSGAVLLSAQTTHA). The segment at 329 to 352 (SVGNADSTSRSLPDGKSYSSQTPY) is disordered. Ca(2+)-binding residues include aspartate 600, aspartate 602, asparagine 604, and aspartate 608. The tract at residues 619-621 (RGD) is integrin-binding motif RGD. Ca(2+) is bound by residues aspartate 851, asparagine 853, aspartate 855, valine 857, and aspartate 859. A disordered region spans residues 1138–1163 (SGECLTVNPGPNTRGRQNWRPIEGKN).

The protein belongs to the PilY1 family. Interacts (via C-terminal 532-1163) with host integrins alpha-V/beta-3 (ITGAV/ITGB3) and alpha-V/beta-5 (ITGAV/ITGB5).

It is found in the fimbrium. The protein localises to the membrane. It localises to the cytoplasm. The protein resides in the cytosol. Its function is as follows. Involved in pilus assembly, twitching motility and adhesion to host cells. Primes type IV pili (T4P) assembly and is required for inclusion of minor pilins PilV, PilW and PilX to the surface pili. Stabilizes assembled pilus fibers likely by antagonizing retraction mediated by PilT. Calcium-binding and calcium release by PilY1 seem to be essential for twitching motility and for regulation of pilus retraction dynamics of PilT. Adhesin for human tissue specifically recognizing a host receptor localized or enriched on basolateral epithelial cell surfaces. Binds host integrins in an calcium-dependent manner in vitro and this interaction may be employed by the bacterium to mediate host epithelial cell binding in vivo. The polypeptide is Type IV pilus biogenesis factor PilY1 (Pseudomonas aeruginosa (strain PAK)).